The following is a 1963-amino-acid chain: MEKYFGEKQERFSFRKLSVGLVSATISSLFFMSVLASSSVDAQETAGVHYKYVADSELSSEEKKQLVYDIPTYVENDDETYYLVYKLNSQNQLAELPNTGSKNERQALVAGASLAALGILIFAVSKKKVKNKTVLHLVLVAGMGNGVLVSVHALENHLLLNYNTDYELTSGEKLPLPKEISGYTYIGYIKEGKTTSDFEVSNQEKSAATPTKQQKVDYNVTPNFVDHPSTVQAIQEQTPVSSTKPTEVQVVEKPFSTELINPRKEEKQSSDSQEQLAEHKNLETKKEEKISPKEKTGVNTLNPQDEVLSGQLNKPELLYREETIETKIDFQEEIQENPDLAEGTVRVKQEGKLGKKVEIVRIFSVNKEEVSREIVSTSTTAPSPRIVEKGTKKTQVIKEQPETGVEHKDVQSGAIVEPAIQPELPEAVVSDKGEPEVQPTLPEAVVTDKGETEVQPESPDTVVSDKGEPEQVAPLPEYKGNIEQVKPETPVEKTKEQGPEKTEEVPVKPTEETPVNPNEGTTEGTSIQEAENPVQPAEESTTNSEKVSPDTSSENTGEVSSNPSDSTTSVGESNKPEHNDSKNENSEKTVEEVPVNPNEGTVEGTSNQETEKPVQPAEETQTNSGKIANENTGEVSNKPSDSKPPVEESNQPEKNGTATKPENSGNTTSENGQTEPEKKLELRNVSDIELYSQTNGTYRQHVSLDGIPENTDTYFVKVKSSAFKDVYIPVASITEEKRNGQSVYKITAKAEKLQQELENKYVDNFTFYLDKKAKEENTNFTSFSNLVKAINQNPSGTYHLAASLNANEVELGPDERSYIKDTFTGRLIGEKDGKNYAIYNLKKPLFENLSGATVEKLSLKNVAISGKNDIGSLANEATNGTKIKQVHVDGVLAGERGVGGLLAKADQSSIAESSFKGRIVNTYETTDAYNIGGLVGHLTGKNASIAKSKATVTISSNTNRSDQTVGGLAGLVDQDAHIQNSYAEGDINNVKHFGKVAGVAGYLWDRTSGEEKHAGELTNVLSDVNVTNGNAITGYHYTGMKVANTFSSKANRVFNVTLEKDEVVSKESFEERGTMLDASQIVSKKAEINPLTLPTVEPLSTSGKKDSDFSKIAHYQANRALVYKNIEKLLPFYNKSTIVKYGNLVKENSLLYQKELLSAVMMKDDQVITDIVSNKQTANKLLLHYNDHSSEKFDLKYQTDFANLAEYNLGNTGLLYTPNQFLYDRDSIVKEVLPELQKLDYQSDAIRKTLGISPEVKLTELYLEDQFSKTKQNLGDSLKKLLSADAGLASDNSVTRGYLVDKIKNNKEALLLGLTYLERWYNFNYGQVNVKDLVMYHPDFFGKGNTSPLDTLIELGKSGFNNLLAKNNVDTYGISLASQHGATDLFSTLEHYRKVFLPNTSNNDWFKSETKAYIVEEKSTIEEVKTKQGLAGTKYSIGVYDRITSATWKYRNMVLPLLTLPERSVFVISTMSSLGFGAYDRYRSSDHKAGKALNDFVEENARETAKRQRDHYDYWYRILDEQSREKLYRTILLYDAYKFGDDTTSGKATAEAKFDSSNPAMKNFFGPVGNKVVHNQHGAYATGDGVYYMSYRMLDKDGAITYTHEMTHDSDQDIYLGGYGRRNGLGPEFFAKGLLQAPDQPSDATITINSILKHSKSDSTEGSRLQVLDPTERFQNAADLQNYVHNMFDLIYMMEYLEGQSIVNKLSVYQKMAALRKIENKYVKDPADGNEVYATNVVKELTEAEARNLNSFESLIDHNILSAREYQSGDYERNGYYTIKLFAPIYSALSSEKGTPGDLMGRRIAYELLAAKGFKDGMVPYISNQYEEDAKQQGQTINLYGKERGLVTDELVLKKVFDGKYKTWAEFKTAMYQERVDQFGNLKQVTFKDPTKPWPSYGTKTINNVDELQALMDQAVLKDAEGPRWSNYDPEIDSAVHKLKRAIFKAYLDQTNDFRSSIFENKK.

A signal peptide spans 1–36 (MEKYFGEKQERFSFRKLSVGLVSATISSLFFMSVLA). A propeptide spanning residues 37-99 (SSSVDAQETA…QNQLAELPNT (63 aa)) is cleaved from the precursor. The short motif at 96-100 (LPNTG) is the LPXTG sorting signal element. A Pentaglycyl murein peptidoglycan amidated threonine modification is found at Thr-99. The next 2 helical transmembrane spans lie at 106–125 (QALV…FAVS) and 132–154 (KTVL…VHAL). Topologically, residues 155 to 1963 (ENHLLLNYNT…FRSSIFENKK (1809 aa)) are extracellular. The segment at 253-305 (KPFSTELINPRKEEKQSSDSQEQLAEHKNLETKKEEKISPKEKTGVNTLNPQD) is disordered. Positions 276–296 (LAEHKNLETKKEEKISPKEKT) are enriched in basic and acidic residues. The 80-residue stretch at 314–393 (KPELLYREET…PRIVEKGTKK (80 aa)) folds into the G5 domain. Residues 402–681 (ETGVEHKDVQ…GQTEPEKKLE (280 aa)) are disordered. A run of 3 repeats spans residues 419 to 435 (AIQP…KGEP), 436 to 452 (EVQP…KGET), and 453 to 469 (EVQP…KGEP). The interval 419 to 469 (AIQPELPEAVVSDKGEPEVQPTLPEAVVTDKGETEVQPESPDTVVSDKGEP) is 3 X 17 AA approximate tandem repeats. The segment covering 485–511 (VKPETPVEKTKEQGPEKTEEVPVKPTE) has biased composition (basic and acidic residues). 2 stretches are compositionally biased toward polar residues: residues 516–529 (NPNE…SIQE) and 538–572 (EEST…SVGE). The segment covering 574–591 (NKPEHNDSKNENSEKTVE) has biased composition (basic and acidic residues). Polar residues-rich tracts occupy residues 618–639 (EETQ…SNKP) and 648–674 (ESNQ…NGQT). His-1604 is a binding site for Zn(2+). Residue Glu-1605 is part of the active site. Residues His-1608 and Glu-1628 each coordinate Zn(2+).

It belongs to the peptidase M26 family. The cofactor is Zn(2+). In terms of processing, the Gram-positive cell-wall anchor motif LPXTG is located in the N-terminal part, in contrast to such motifs in other known streptococcal and staphylococcal proteins. The protease could be cleaved by the sortase and anchored in the membrane via the two potential N-terminal transmembrane domains, whereas the propeptide located prior to the LPXTG motif would remain attached to the cell wall peptidoglycan by an amide bond.

The protein localises to the secreted. Its subcellular location is the cell wall. The protein resides in the membrane. It carries out the reaction Cleavage of Pro-|-Thr bond in the hinge region of the heavy chain of human IgA.. In terms of biological role, zinc metalloproteinase which cleaves human immunoglobulin A1 (IgA1) in the hinge region. The chain is Immunoglobulin A1 protease (iga) from Streptococcus pneumoniae (strain ATCC BAA-255 / R6).